A 582-amino-acid chain; its full sequence is Two-component response regulator ORR26 (582 aa).

The region spanning 11 to 126 (RVLVVDDDPT…ELRNIWQHVY (116 aa)) is the Response regulatory domain. 4-aspartylphosphate is present on aspartate 62. Residues 166–182 (SDTMRKRKDVDKDHADQ) show a composition bias toward basic and acidic residues. Residues 166–187 (SDTMRKRKDVDKDHADQESSDG) form a disordered region. A DNA-binding region (myb-like GARP) is located at residues 189–248 (TVKKARVVWSVDLHQKFVNAVNQIGFDKVGPKKILDLMNVPGLTRENVASHLQKYRLYLS).

This sequence belongs to the ARR family. Type-B subfamily. In terms of processing, two-component system major event consists of a His-to-Asp phosphorelay between a sensor histidine kinase (HK) and a response regulator (RR). In plants, the His-to-Asp phosphorelay involves an additional intermediate named Histidine-containing phosphotransfer protein (HPt). This multistep phosphorelay consists of a His-Asp-His-Asp sequential transfer of a phosphate group between first a His and an Asp of the HK protein, followed by the transfer to a conserved His of the HPt protein and finally the transfer to an Asp in the receiver domain of the RR protein.

The protein resides in the nucleus. Functionally, transcriptional activator that binds specific DNA sequence. Functions as a response regulator involved in His-to-Asp phosphorelay signal transduction system. Phosphorylation of the Asp residue in the receiver domain activates the ability of the protein to promote the transcription of target genes. May directly activate some type-A response regulators in response to cytokinins. This is Two-component response regulator ORR26 from Oryza sativa subsp. japonica (Rice).